A 442-amino-acid chain; its full sequence is Glutamate-1-semialdehyde 2,1-aminomutase (442 aa).

K282 bears the N6-(pyridoxal phosphate)lysine mark.

Belongs to the class-III pyridoxal-phosphate-dependent aminotransferase family. HemL subfamily. As to quaternary structure, homodimer. It depends on pyridoxal 5'-phosphate as a cofactor.

Its subcellular location is the cytoplasm. It carries out the reaction (S)-4-amino-5-oxopentanoate = 5-aminolevulinate. The protein operates within porphyrin-containing compound metabolism; protoporphyrin-IX biosynthesis; 5-aminolevulinate from L-glutamyl-tRNA(Glu): step 2/2. The polypeptide is Glutamate-1-semialdehyde 2,1-aminomutase (Polaromonas sp. (strain JS666 / ATCC BAA-500)).